A 200-amino-acid polypeptide reads, in one-letter code: Thymidylate kinase (200 aa).

10–17 provides a ligand contact to ATP; that stretch reads GIDGAGKS.

The protein belongs to the thymidylate kinase family.

It carries out the reaction dTMP + ATP = dTDP + ADP. Phosphorylation of dTMP to form dTDP in both de novo and salvage pathways of dTTP synthesis. This chain is Thymidylate kinase, found in Cupriavidus metallidurans (strain ATCC 43123 / DSM 2839 / NBRC 102507 / CH34) (Ralstonia metallidurans).